A 297-amino-acid polypeptide reads, in one-letter code: uncharacterized protein (297 aa).

5 helical membrane passes run 114-136 (YNRW…LSSG), 150-170 (LLYD…VFNV), 197-217 (MPIV…GVHL), 227-247 (AFTV…KAMI), and 269-289 (FINT…PGLL).

It belongs to the ThrE exporter (TC 2.A.79) family.

Its subcellular location is the cell inner membrane. This is an uncharacterized protein from Haemophilus influenzae (strain ATCC 51907 / DSM 11121 / KW20 / Rd).